The primary structure comprises 300 residues: Acyl-CoA-binding domain-containing protein 6 (300 aa).

Residues 1-19 (MASRSPSSSPDSATGSGTD) show a composition bias toward low complexity. The segment at 1–43 (MASRSPSSSPDSATGSGTDPARPDTGEPLGGGSDSDSDFGLGK) is disordered. An ACB domain is found at 60 to 145 (LENEFESAAD…VHALDPEGSQ (86 aa)). Residues 87–91 (YARFK), lysine 113, and tyrosine 132 each bind an acyl-CoA. The disordered stretch occupies residues 142-162 (EGSQKSSERRGGEKRTGFGGP). Basic and acidic residues predominate over residues 147-157 (SSERRGGEKRT). ANK repeat units lie at residues 209 to 238 (EGRA…DINS) and 242 to 271 (EGQT…DPSI). The tract at residues 270 to 300 (SIKDQEGSLPEEVTESSAISSLLRQYTAPKG) is disordered. A compositionally biased stretch (polar residues) spans 284 to 293 (ESSAISSLLR).

In terms of tissue distribution, higly expressed in the central nervous system, developing eyes, otic vesicle, and trunk muscles.

The protein localises to the cytoplasm. The protein resides in the nucleus. Its function is as follows. Binds long-chain acyl-coenzyme A molecules with a strong preference for unsaturated C18:1-CoA. Does not bind fatty acids. Plays a role in protein N-myristoylation. This Danio rerio (Zebrafish) protein is Acyl-CoA-binding domain-containing protein 6 (acbd6).